The primary structure comprises 502 residues: MSIRAEEISALIKQQIENYESQIQVSDVGTVIQIGDGIARVHGLDNVMSGELVEFANGVMGMALNLEENNVGIVILGPYTGIKEGDEVRRTGRIMEVPVGEALIGRVVNPLGQPVDGLGPVETTETRPIESPAPGVMDRKSVHEPLQTGIKAIDALVPIGRGQRELIIGDRQTGKTAVAIDTILNQKGQDMICIYVAIGQKESTVRTVVETLRKHGALDYTIVVTASASQPAPLLFLAPYAGVSMGEYFMYKGKHVLVVYDDLSKQAAAYRELSLLLRRPPGREAYPGDVFYLHSRLLERAAKLSDAKGAGSLTALPFVETQAGDISAYIPTNVISITDGQIFLQSDLFFSGVRPAINAGLSVSRVGGAAQIKAMKKVSGTLRLDLAAYRELEAFAQFGSDLDKATQAKLARGARTVEVLKQDLHQPIPVEKQVAIIYALTRGFLDDIPVEDVRRFEKEFFLWLDQNGQHLLEHIRTTKDLPNEEDFNKAIEAFKKTFVVSQ.

The disordered stretch occupies residues 115–139 (VDGLGPVETTETRPIESPAPGVMDR). An ATP-binding site is contributed by 169-176 (GDRQTGKT).

This sequence belongs to the ATPase alpha/beta chains family. F-type ATPases have 2 components, CF(1) - the catalytic core - and CF(0) - the membrane proton channel. CF(1) has five subunits: alpha(3), beta(3), gamma(1), delta(1), epsilon(1). CF(0) has three main subunits: a(1), b(2) and c(9-12). The alpha and beta chains form an alternating ring which encloses part of the gamma chain. CF(1) is attached to CF(0) by a central stalk formed by the gamma and epsilon chains, while a peripheral stalk is formed by the delta and b chains.

Its subcellular location is the cell membrane. It carries out the reaction ATP + H2O + 4 H(+)(in) = ADP + phosphate + 5 H(+)(out). In terms of biological role, produces ATP from ADP in the presence of a proton gradient across the membrane. The alpha chain is a regulatory subunit. In Geobacillus thermodenitrificans (strain NG80-2), this protein is ATP synthase subunit alpha.